Consider the following 291-residue polypeptide: Lysosomal amino acid transporter 1 homolog (291 aa).

Over M1–A37 the chain is Lumenal. An N-linked (GlcNAc...) asparagine glycan is attached at N10. The PQ-loop 1 domain occupies W34 to Y100. Residues S38 to I58 form a helical membrane-spanning segment. Residues K59–S71 lie on the Cytoplasmic side of the membrane. A helical membrane pass occupies residues L72–A92. At D93–Q98 the chain is on the lumenal side. A helical transmembrane segment spans residues T99–Y119. Topologically, residues K120 to S134 are cytoplasmic. The helical transmembrane segment at V135–V155 threads the bilayer. Topologically, residues A156 to V182 are lumenal. Residues I183–I203 form a helical membrane-spanning segment. The 60-residue stretch at G184–Q243 folds into the PQ-loop 2 domain. Residues R204–G214 lie on the Cytoplasmic side of the membrane. A helical transmembrane segment spans residues I215–L235. Topologically, residues L236 to P254 are lumenal. The chain crosses the membrane as a helical span at residues W255 to V275. Over Y276–S291 the chain is Cytoplasmic. Residues L288–L289 carry the Di-leucine motif motif.

It belongs to the laat-1 family.

Its subcellular location is the lysosome membrane. Functionally, amino acid transporter that specifically mediates the pH-dependent export of the cationic amino acids arginine, histidine and lysine from lysosomes. The polypeptide is Lysosomal amino acid transporter 1 homolog (Homo sapiens (Human)).